The sequence spans 378 residues: Chorismate synthase (378 aa).

An NADP(+)-binding site is contributed by Arg50. FMN-binding positions include 127 to 129 (RAS), 255 to 256 (NA), Gly300, 315 to 319 (KPTPS), and Arg342.

This sequence belongs to the chorismate synthase family. FMNH2 is required as a cofactor.

It catalyses the reaction 5-O-(1-carboxyvinyl)-3-phosphoshikimate = chorismate + phosphate. Its pathway is metabolic intermediate biosynthesis; chorismate biosynthesis; chorismate from D-erythrose 4-phosphate and phosphoenolpyruvate: step 7/7. In terms of biological role, catalyzes the anti-1,4-elimination of the C-3 phosphate and the C-6 proR hydrogen from 5-enolpyruvylshikimate-3-phosphate (EPSP) to yield chorismate, which is the branch point compound that serves as the starting substrate for the three terminal pathways of aromatic amino acid biosynthesis. This reaction introduces a second double bond into the aromatic ring system. The polypeptide is Chorismate synthase (Methanocaldococcus jannaschii (strain ATCC 43067 / DSM 2661 / JAL-1 / JCM 10045 / NBRC 100440) (Methanococcus jannaschii)).